A 383-amino-acid chain; its full sequence is Queuine tRNA-ribosyltransferase (383 aa).

The active-site Proton acceptor is the Asp92. Residues 92-96 (DSGGF), Asp146, Gln190, and Gly217 each bind substrate. Positions 248 to 254 (GVGKPED) are RNA binding. Asp267 (nucleophile) is an active-site residue. The tract at residues 272 to 276 (TRNAR) is RNA binding; important for wobble base 34 recognition. Cys310, Cys312, Cys315, and His341 together coordinate Zn(2+).

This sequence belongs to the queuine tRNA-ribosyltransferase family. Homodimer. Within each dimer, one monomer is responsible for RNA recognition and catalysis, while the other monomer binds to the replacement base PreQ1. The cofactor is Zn(2+).

The catalysed reaction is 7-aminomethyl-7-carbaguanine + guanosine(34) in tRNA = 7-aminomethyl-7-carbaguanosine(34) in tRNA + guanine. It participates in tRNA modification; tRNA-queuosine biosynthesis. In terms of biological role, catalyzes the base-exchange of a guanine (G) residue with the queuine precursor 7-aminomethyl-7-deazaguanine (PreQ1) at position 34 (anticodon wobble position) in tRNAs with GU(N) anticodons (tRNA-Asp, -Asn, -His and -Tyr). Catalysis occurs through a double-displacement mechanism. The nucleophile active site attacks the C1' of nucleotide 34 to detach the guanine base from the RNA, forming a covalent enzyme-RNA intermediate. The proton acceptor active site deprotonates the incoming PreQ1, allowing a nucleophilic attack on the C1' of the ribose to form the product. After dissociation, two additional enzymatic reactions on the tRNA convert PreQ1 to queuine (Q), resulting in the hypermodified nucleoside queuosine (7-(((4,5-cis-dihydroxy-2-cyclopenten-1-yl)amino)methyl)-7-deazaguanosine). The protein is Queuine tRNA-ribosyltransferase of Psychrobacter sp. (strain PRwf-1).